Reading from the N-terminus, the 89-residue chain is Protein S100-A8 (89 aa).

EF-hand domains follow at residues 12–47 (LIDV…KFMK) and 46–81 (MKKK…VGLE). Zn(2+) contacts are provided by His17 and His27. Ca(2+) is bound at residue Asp33. S-nitrosocysteine is present on Cys42. Residues Asp59, Asn61, Asp63, and Glu70 each coordinate Ca(2+). Position 83 (His83) interacts with Zn(2+).

Belongs to the S-100 family. In terms of assembly, homodimer. Preferentially exists as a heterodimer or heterotetramer with S100A9 known as calprotectin (S100A8/A9). S100A8 interacts with AGER, ATP2A2 and with the heterodimeric complex formed by TLR4 and LY96. Calprotectin (S100A8/9) interacts with CEACAM3 and tubulin filaments in a calcium-dependent manner. Heterotetrameric calprotectin (S100A8/A9) interacts with ANXA6 and associates with tubulin filaments in activated monocytes. S100A8 and calprotectin (S100A8/9) interact with NCF2/P67PHOX, RAC1 and RAC2. Calprotectin (S100A8/9) interacts with CYBA and CYBB. Calprotectin (S100A8/9) interacts with NOS2 to form the iNOS-S100A8/A9 transnitrosylase complex. Calprotectin (S100A8/9) interacts with CD69. In terms of tissue distribution, found essentially in phagocytic cells.

The protein localises to the secreted. It is found in the cytoplasm. It localises to the cytoskeleton. Its subcellular location is the cell membrane. Its function is as follows. S100A8 is a calcium- and zinc-binding protein which plays a prominent role in the regulation of inflammatory processes and immune response. It can induce neutrophil chemotaxis and adhesion. Predominantly found as calprotectin (S100A8/A9) which has a wide plethora of intra- and extracellular functions. The intracellular functions include: facilitating leukocyte arachidonic acid trafficking and metabolism, modulation of the tubulin-dependent cytoskeleton during migration of phagocytes and activation of the neutrophilic NADPH-oxidase. Also participates in regulatory T-cell differentiation together with CD69. Activates NADPH-oxidase by facilitating the enzyme complex assembly at the cell membrane, transferring arachidonic acid, an essential cofactor, to the enzyme complex and S100A8 contributes to the enzyme assembly by directly binding to NCF2/P67PHOX. The extracellular functions involve pro-inflammatory, antimicrobial, oxidant-scavenging and apoptosis-inducing activities. Its pro-inflammatory activity includes recruitment of leukocytes, promotion of cytokine and chemokine production, and regulation of leukocyte adhesion and migration. Acts as an alarmin or a danger associated molecular pattern (DAMP) molecule and stimulates innate immune cells via binding to pattern recognition receptors such as Toll-like receptor 4 (TLR4) and receptor for advanced glycation endproducts (AGER). Binding to TLR4 and AGER activates the MAP-kinase and NF-kappa-B signaling pathways resulting in the amplification of the pro-inflammatory cascade. Has antimicrobial activity towards bacteria and fungi and exerts its antimicrobial activity probably via chelation of Zn(2+) which is essential for microbial growth. Can induce cell death via autophagy and apoptosis and this occurs through the cross-talk of mitochondria and lysosomes via reactive oxygen species (ROS) and the process involves BNIP3. Can regulate neutrophil number and apoptosis by an anti-apoptotic effect; regulates cell survival via ITGAM/ITGB and TLR4 and a signaling mechanism involving MEK-ERK. Its role as an oxidant scavenger has a protective role in preventing exaggerated tissue damage by scavenging oxidants. The iNOS-S100A8/A9 transnitrosylase complex is proposed to direct selective inflammatory stimulus-dependent S-nitrosylation of multiple targets such as GAPDH, ANXA5, EZR, MSN and VIM by recognizing a [IL]-x-C-x-x-[DE] motif; S100A8 seems to contribute to S-nitrosylation site selectivity. The chain is Protein S100-A8 (S100A8) from Bos taurus (Bovine).